Reading from the N-terminus, the 243-residue chain is Phosphate-specific transport system accessory protein PhoU (243 aa).

It belongs to the PhoU family. In terms of assembly, homodimer. Interacts with phosphate regulon transcriptional regulatory protein PhoB and ferric uptake regulation protein Fur.

Its subcellular location is the cytoplasm. Part of the phosphate (Pho) regulon, which plays a key role in phosphate homeostasis. Encoded together with proteins of the phosphate-specific transport (Pst) system in the polycistronic pstSCAB-phoU operon. PhoU is essential for the repression of the Pho regulon at high phosphate conditions. In this role, it may bind, possibly as a chaperone, to PhoR, PhoB or a PhoR-PhoB complex to promote dephosphorylation of phospho-PhoB, or inhibit formation of the PhoR-PhoB transitory complex. The sequence is that of Phosphate-specific transport system accessory protein PhoU from Edwardsiella tarda.